The chain runs to 365 residues: Chorismate synthase (365 aa).

An NADP(+)-binding site is contributed by arginine 48. FMN-binding positions include 125-127 (RSS), 238-239 (NA), glycine 278, 293-297 (KPTSS), and arginine 319.

Belongs to the chorismate synthase family. Homotetramer. It depends on FMNH2 as a cofactor.

The enzyme catalyses 5-O-(1-carboxyvinyl)-3-phosphoshikimate = chorismate + phosphate. Its pathway is metabolic intermediate biosynthesis; chorismate biosynthesis; chorismate from D-erythrose 4-phosphate and phosphoenolpyruvate: step 7/7. Catalyzes the anti-1,4-elimination of the C-3 phosphate and the C-6 proR hydrogen from 5-enolpyruvylshikimate-3-phosphate (EPSP) to yield chorismate, which is the branch point compound that serves as the starting substrate for the three terminal pathways of aromatic amino acid biosynthesis. This reaction introduces a second double bond into the aromatic ring system. This Ruthia magnifica subsp. Calyptogena magnifica protein is Chorismate synthase.